We begin with the raw amino-acid sequence, 256 residues long: Small ribosomal subunit protein uS2 (256 aa).

The protein belongs to the universal ribosomal protein uS2 family.

The polypeptide is Small ribosomal subunit protein uS2 (Brucella abortus (strain S19)).